A 200-amino-acid chain; its full sequence is ATP-dependent Clp protease proteolytic subunit (200 aa).

Serine 104 serves as the catalytic Nucleophile. Residue histidine 129 is part of the active site.

Belongs to the peptidase S14 family. As to quaternary structure, fourteen ClpP subunits assemble into 2 heptameric rings which stack back to back to give a disk-like structure with a central cavity, resembling the structure of eukaryotic proteasomes.

Its subcellular location is the cytoplasm. It catalyses the reaction Hydrolysis of proteins to small peptides in the presence of ATP and magnesium. alpha-casein is the usual test substrate. In the absence of ATP, only oligopeptides shorter than five residues are hydrolyzed (such as succinyl-Leu-Tyr-|-NHMec, and Leu-Tyr-Leu-|-Tyr-Trp, in which cleavage of the -Tyr-|-Leu- and -Tyr-|-Trp bonds also occurs).. Its function is as follows. Cleaves peptides in various proteins in a process that requires ATP hydrolysis. Has a chymotrypsin-like activity. Plays a major role in the degradation of misfolded proteins. This chain is ATP-dependent Clp protease proteolytic subunit, found in Rubrobacter xylanophilus (strain DSM 9941 / JCM 11954 / NBRC 16129 / PRD-1).